The following is a 235-amino-acid chain: Segregation and condensation protein A (235 aa).

This sequence belongs to the ScpA family. In terms of assembly, component of a cohesin-like complex composed of ScpA, ScpB and the Smc homodimer, in which ScpA and ScpB bind to the head domain of Smc. The presence of the three proteins is required for the association of the complex with DNA.

The protein resides in the cytoplasm. In terms of biological role, participates in chromosomal partition during cell division. May act via the formation of a condensin-like complex containing Smc and ScpB that pull DNA away from mid-cell into both cell halves. The chain is Segregation and condensation protein A from Streptococcus agalactiae serotype Ia (strain ATCC 27591 / A909 / CDC SS700).